Here is a 353-residue protein sequence, read N- to C-terminus: GTPase Obg (353 aa).

One can recognise an Obg domain in the interval 1 to 159; the sequence is MKFVDEVRIH…RDLVLELKLL (159 aa). The OBG-type G domain maps to 160–333; sequence ADVGIVGYPN…LMDAVGRALY (174 aa). GTP-binding positions include 166 to 173, 191 to 195, 212 to 215, 283 to 286, and 314 to 316; these read GYPNAGKS, FTTLV, DIPG, TKID, and SAV. Residues Ser-173 and Thr-193 each contribute to the Mg(2+) site.

This sequence belongs to the TRAFAC class OBG-HflX-like GTPase superfamily. OBG GTPase family. As to quaternary structure, monomer. The cofactor is Mg(2+).

It is found in the cytoplasm. An essential GTPase which binds GTP, GDP and possibly (p)ppGpp with moderate affinity, with high nucleotide exchange rates and a fairly low GTP hydrolysis rate. Plays a role in control of the cell cycle, stress response, ribosome biogenesis and in those bacteria that undergo differentiation, in morphogenesis control. This chain is GTPase Obg, found in Anaeromyxobacter sp. (strain Fw109-5).